The chain runs to 874 residues: AP-1 complex subunit gamma-1 (874 aa).

The GAE domain occupies 761 to 873; the sequence is TVAKSHTVYT…QDQTDWAQPS (113 aa).

It belongs to the adaptor complexes large subunit family. In terms of assembly, adaptor protein complex 1 (AP-1) is a heterotetramer composed of two large adaptins (gamma-type subunit APL4 and beta-type subunit APL2), a medium adaptin (mu-type subunit APM1) and a small adaptin (sigma-type subunit APS1). AP-1 interacts with clathrin.

It is found in the cytoplasmic vesicle. The protein resides in the clathrin-coated vesicle membrane. It localises to the golgi apparatus. Adaptins are components of the adaptor complexes which link clathrin to receptors in coated vesicles. Clathrin-associated protein complexes are believed to interact with the cytoplasmic tails of membrane proteins, leading to their selection and concentration. The AP-1 complex interacts directly with clathrin. Required for apical growth extension. The chain is AP-1 complex subunit gamma-1 (APL4) from Mycosarcoma maydis (Corn smut fungus).